The primary structure comprises 227 residues: Cytochrome c oxidase subunit 2 (227 aa).

At 1 to 14 the chain is on the mitochondrial intermembrane side; that stretch reads MAHAAQVGLQDATS. Residues 15–45 traverse the membrane as a helical segment; that stretch reads PIMEELIIFHDHALMIIFLICFLVLYALFLT. The Mitochondrial matrix portion of the chain corresponds to 46–59; it reads LTTKLTNTSISDAQ. The helical transmembrane segment at 60–87 threads the bilayer; it reads EMETVWTILPAIILVLIALPSLRILYMT. At 88-227 the chain is on the mitochondrial intermembrane side; that stretch reads DEVNDPSFTI…IFEMGPVFTL (140 aa). 6 residues coordinate Cu cation: His-161, Cys-196, Glu-198, Cys-200, His-204, and Met-207. A Mg(2+)-binding site is contributed by Glu-198.

It belongs to the cytochrome c oxidase subunit 2 family. In terms of assembly, component of the cytochrome c oxidase (complex IV, CIV), a multisubunit enzyme composed of 14 subunits. The complex is composed of a catalytic core of 3 subunits MT-CO1, MT-CO2 and MT-CO3, encoded in the mitochondrial DNA, and 11 supernumerary subunits COX4I, COX5A, COX5B, COX6A, COX6B, COX6C, COX7A, COX7B, COX7C, COX8 and NDUFA4, which are encoded in the nuclear genome. The complex exists as a monomer or a dimer and forms supercomplexes (SCs) in the inner mitochondrial membrane with NADH-ubiquinone oxidoreductase (complex I, CI) and ubiquinol-cytochrome c oxidoreductase (cytochrome b-c1 complex, complex III, CIII), resulting in different assemblies (supercomplex SCI(1)III(2)IV(1) and megacomplex MCI(2)III(2)IV(2)). Found in a complex with TMEM177, COA6, COX18, COX20, SCO1 and SCO2. Interacts with TMEM177 in a COX20-dependent manner. Interacts with COX20. Interacts with COX16. Cu cation serves as cofactor.

It is found in the mitochondrion inner membrane. The catalysed reaction is 4 Fe(II)-[cytochrome c] + O2 + 8 H(+)(in) = 4 Fe(III)-[cytochrome c] + 2 H2O + 4 H(+)(out). Its function is as follows. Component of the cytochrome c oxidase, the last enzyme in the mitochondrial electron transport chain which drives oxidative phosphorylation. The respiratory chain contains 3 multisubunit complexes succinate dehydrogenase (complex II, CII), ubiquinol-cytochrome c oxidoreductase (cytochrome b-c1 complex, complex III, CIII) and cytochrome c oxidase (complex IV, CIV), that cooperate to transfer electrons derived from NADH and succinate to molecular oxygen, creating an electrochemical gradient over the inner membrane that drives transmembrane transport and the ATP synthase. Cytochrome c oxidase is the component of the respiratory chain that catalyzes the reduction of oxygen to water. Electrons originating from reduced cytochrome c in the intermembrane space (IMS) are transferred via the dinuclear copper A center (CU(A)) of subunit 2 and heme A of subunit 1 to the active site in subunit 1, a binuclear center (BNC) formed by heme A3 and copper B (CU(B)). The BNC reduces molecular oxygen to 2 water molecules using 4 electrons from cytochrome c in the IMS and 4 protons from the mitochondrial matrix. In Pan troglodytes (Chimpanzee), this protein is Cytochrome c oxidase subunit 2 (MT-CO2).